Reading from the N-terminus, the 83-residue chain is Hainantoxin-III 5 (83 aa).

A signal peptide spans 1 to 21 (MKASRFLALAGLVLLFVVGYA). A propeptide spanning residues 22–48 (SESEEKEFPRELLSKIFAVDDFKGEER) is cleaved from the precursor. 3 disulfides stabilise this stretch: cysteine 50/cysteine 65, cysteine 57/cysteine 70, and cysteine 64/cysteine 77. Leucine amide is present on leucine 81.

This sequence belongs to the neurotoxin 10 (Hwtx-1) family. 15 (Hntx-3) subfamily. As to quaternary structure, monomer. In terms of tissue distribution, expressed by the venom gland.

Its subcellular location is the secreted. In terms of biological role, selective antagonist of neuronal tetrodotoxin (TTX)-sensitive voltage-gated sodium channels (IC(50)=1270 nM on Nav1.1/SCN1A, 270 nM on Nav1.2/SCN2A, 491 nM on Nav1.3/SCN3A and 232 nM on Nav1.7/SCN9A). This toxin suppress Nav1.7 current amplitude without significantly altering the activation, inactivation, and repriming kinetics. Short extreme depolarizations partially activate the toxin-bound channel, indicating voltage-dependent inhibition of this toxin. This toxin increases the deactivation of the Nav1.7 current after extreme depolarizations. The toxin-Nav1.7 complex is gradually dissociated upon prolonged strong depolarizations in a voltage-dependent manner, and the unbound toxin rebinds to Nav1.7 after a long repolarization. Moreover, analysis of chimeric channels showed that the DIIS3-S4 linker is critical for toxin binding to Nav1.7. These data are consistent with this toxin interacting with Nav1.7 site 4 and trapping the domain II voltage sensor in the closed state. The polypeptide is Hainantoxin-III 5 (Cyriopagopus hainanus (Chinese bird spider)).